We begin with the raw amino-acid sequence, 584 residues long: MHLLPVITAVALIYTPLASAVPSSSNPQFPAALLTESNSAALPTQEWHSPRLWTRLRNSIIETIWRVPSQQRHPSRIKSPASSRKAPASIRARYGDDVVLRFTIQSQSDIQALVEASNILFLDIWASTDEWVDIRLAKDVVPSLLGLLPSSLKAASVPVIHDLAQAVYESYPQPSSSTPNPHRAFSPSIRLSSEAQNIFFQDYQPLSVMTPWMRLLASMFSTHVSLISLGTSYEGRDITAFRIGTHPMNPDNPFGQRKTIIITGGSHAREWISVSTVNYVAYSLITGYGKSKAITKLIEEFDWVLVPTMNPDGYVYTWETDRLWRKNRQENNLQFCPGVDLDRTWGFEWDGTDSRSNPCSEDFAGDGPFGGTEAQRISQWARNQTMNNNVTFIGFLDLHSYSQQILYPYSYSCNNIPPTLENLEELAIGISRAIRRTDNEHYDVSSACQGSVNSGKKKQGPALKRMESAGGSALDWFYHDLHVRYAYQLKLRDKGSYGFLLPRSNIIPTGKEVYNAVLEFGKFLLGKEAPSVDWDAEFQVSDPSRPISPDNEYHDRDVEHEALQQLDDEDGEADSHWVLRTQRS.

Residues 1 to 20 form the signal peptide; it reads MHLLPVITAVALIYTPLASA. The propeptide occupies 21 to 174; the sequence is VPSSSNPQFP…QAVYESYPQP (154 aa). Positions 202-524 constitute a Peptidase M14 domain; sequence DYQPLSVMTP…NAVLEFGKFL (323 aa). Positions 267 and 270 each coordinate Zn(2+). Residues 267-270, Arg325, and 342-343 contribute to the substrate site; these read HARE and DR. A disulfide bridge connects residues Cys336 and Cys359. 2 N-linked (GlcNAc...) asparagine glycosylation sites follow: Asn383 and Asn389. His399 is a binding site for Zn(2+). Residue 400 to 401 participates in substrate binding; sequence SY. Residues 564–584 form a disordered region; that stretch reads QQLDDEDGEADSHWVLRTQRS.

It belongs to the peptidase M14 family. It depends on Zn(2+) as a cofactor.

It localises to the vacuole. The protein localises to the secreted. In terms of biological role, inactive carboxypeptidase that may play a role in cell wall organization and biogenesis. In Uncinocarpus reesii (strain UAMH 1704), this protein is Inactive metallocarboxypeptidase ECM14 (ECM14).